Consider the following 159-residue polypeptide: ATP synthase subunit b (159 aa).

Residues 2–22 traverse the membrane as a helical segment; it reads EFNLVTIGFTIVNFIILMLIL.

The protein belongs to the ATPase B chain family. F-type ATPases have 2 components, F(1) - the catalytic core - and F(0) - the membrane proton channel. F(1) has five subunits: alpha(3), beta(3), gamma(1), delta(1), epsilon(1). F(0) has three main subunits: a(1), b(2) and c(10-14). The alpha and beta chains form an alternating ring which encloses part of the gamma chain. F(1) is attached to F(0) by a central stalk formed by the gamma and epsilon chains, while a peripheral stalk is formed by the delta and b chains.

It localises to the cell membrane. Functionally, f(1)F(0) ATP synthase produces ATP from ADP in the presence of a proton or sodium gradient. F-type ATPases consist of two structural domains, F(1) containing the extramembraneous catalytic core and F(0) containing the membrane proton channel, linked together by a central stalk and a peripheral stalk. During catalysis, ATP synthesis in the catalytic domain of F(1) is coupled via a rotary mechanism of the central stalk subunits to proton translocation. In terms of biological role, component of the F(0) channel, it forms part of the peripheral stalk, linking F(1) to F(0). The polypeptide is ATP synthase subunit b (Clostridium acetobutylicum (strain ATCC 824 / DSM 792 / JCM 1419 / IAM 19013 / LMG 5710 / NBRC 13948 / NRRL B-527 / VKM B-1787 / 2291 / W)).